The sequence spans 158 residues: C-type lectin lectoxin-Enh5 (158 aa).

An N-terminal signal peptide occupies residues 1–23 (MGQFTVVSLGLLAVFLSLSGAKG). 3 disulfide bridges follow: cysteine 26–cysteine 37, cysteine 54–cysteine 154, and cysteine 129–cysteine 146. Positions 33–155 (RNGVCNKLFP…CASLHPFICQ (123 aa)) constitute a C-type lectin domain. The Mannose-binding motif lies at 119-121 (EPN). Ca(2+) contacts are provided by glutamate 127, asparagine 142, and aspartate 143.

This sequence belongs to the true venom lectin family. Expressed by the venom gland.

The protein localises to the secreted. Its function is as follows. Mannose-binding lectin which recognizes specific carbohydrate structures and agglutinates a variety of animal cells by binding to cell-surface glycoproteins and glycolipids. May be a calcium-dependent lectin. This chain is C-type lectin lectoxin-Enh5, found in Pseudoferania polylepis (Macleay's water snake).